The primary structure comprises 357 residues: tRNA N6-adenosine threonylcarbamoyltransferase (357 aa).

Residues H113 and H117 each contribute to the Fe cation site. Substrate is bound by residues 136–140 (LVSGG), D169, G182, and N288. D316 is a binding site for Fe cation.

The protein belongs to the KAE1 / TsaD family. Fe(2+) is required as a cofactor.

It localises to the cytoplasm. The catalysed reaction is L-threonylcarbamoyladenylate + adenosine(37) in tRNA = N(6)-L-threonylcarbamoyladenosine(37) in tRNA + AMP + H(+). Its function is as follows. Required for the formation of a threonylcarbamoyl group on adenosine at position 37 (t(6)A37) in tRNAs that read codons beginning with adenine. Is involved in the transfer of the threonylcarbamoyl moiety of threonylcarbamoyl-AMP (TC-AMP) to the N6 group of A37, together with TsaE and TsaB. TsaD likely plays a direct catalytic role in this reaction. The chain is tRNA N6-adenosine threonylcarbamoyltransferase from Gemmatimonas aurantiaca (strain DSM 14586 / JCM 11422 / NBRC 100505 / T-27).